We begin with the raw amino-acid sequence, 331 residues long: Uroporphyrinogen decarboxylase (331 aa).

Residues Arg22–Arg26, Asp71, Tyr145, Ser199, and His308 contribute to the substrate site.

Belongs to the uroporphyrinogen decarboxylase family. In terms of assembly, homodimer.

It is found in the cytoplasm. The enzyme catalyses uroporphyrinogen III + 4 H(+) = coproporphyrinogen III + 4 CO2. It participates in porphyrin-containing compound metabolism; protoporphyrin-IX biosynthesis; coproporphyrinogen-III from 5-aminolevulinate: step 4/4. Its function is as follows. Catalyzes the decarboxylation of four acetate groups of uroporphyrinogen-III to yield coproporphyrinogen-III. This Picrophilus torridus (strain ATCC 700027 / DSM 9790 / JCM 10055 / NBRC 100828 / KAW 2/3) protein is Uroporphyrinogen decarboxylase.